An 88-amino-acid chain; its full sequence is Small ribosomal subunit protein bS20 (88 aa).

Belongs to the bacterial ribosomal protein bS20 family.

Binds directly to 16S ribosomal RNA. The chain is Small ribosomal subunit protein bS20 from Clostridioides difficile (strain 630) (Peptoclostridium difficile).